We begin with the raw amino-acid sequence, 70 residues long: Dermaseptin-H3 (70 aa).

The N-terminal stretch at 1–22 (MAFLKKSLFLVLFLGMVSLSIC) is a signal peptide. Positions 23 to 43 (EEEKRENEDEELQEDDEQSEM) are excised as a propeptide. Residues 25-44 (EKRENEDEELQEDDEQSEMK) form a disordered region. Residues 30-40 (EDEELQEDDEQ) are compositionally biased toward acidic residues. L70 is subject to Leucine amide.

Expressed by the skin glands.

The protein resides in the secreted. Functionally, has antibacterial activity against the Gram-negative bacteria E.coli and P.aeruginosa, and the Gram-positive bacteria S.aureus and M.luteus. Has antiprotozoal activity against L.amazonensis. No hemolytic activity. The protein is Dermaseptin-H3 of Pithecopus hypochondrialis (Orange-legged leaf frog).